The sequence spans 135 residues: Ribonuclease P protein component 2 (135 aa).

This sequence belongs to the eukaryotic/archaeal RNase P protein component 2 family. Consists of a catalytic RNA component and at least 4-5 protein subunits.

The protein localises to the cytoplasm. The enzyme catalyses Endonucleolytic cleavage of RNA, removing 5'-extranucleotides from tRNA precursor.. In terms of biological role, part of ribonuclease P, a protein complex that generates mature tRNA molecules by cleaving their 5'-ends. The polypeptide is Ribonuclease P protein component 2 (Methanococcus aeolicus (strain ATCC BAA-1280 / DSM 17508 / OCM 812 / Nankai-3)).